The chain runs to 315 residues: Acetyl-coenzyme A carboxylase carboxyl transferase subunit alpha (315 aa).

The region spanning 32–289 (EIDLLEASLE…KQAFVDQLEQ (258 aa)) is the CoA carboxyltransferase C-terminal domain.

This sequence belongs to the AccA family. As to quaternary structure, acetyl-CoA carboxylase is a heterohexamer composed of biotin carboxyl carrier protein (AccB), biotin carboxylase (AccC) and two subunits each of ACCase subunit alpha (AccA) and ACCase subunit beta (AccD).

The protein resides in the cytoplasm. It catalyses the reaction N(6)-carboxybiotinyl-L-lysyl-[protein] + acetyl-CoA = N(6)-biotinyl-L-lysyl-[protein] + malonyl-CoA. The protein operates within lipid metabolism; malonyl-CoA biosynthesis; malonyl-CoA from acetyl-CoA: step 1/1. In terms of biological role, component of the acetyl coenzyme A carboxylase (ACC) complex. First, biotin carboxylase catalyzes the carboxylation of biotin on its carrier protein (BCCP) and then the CO(2) group is transferred by the carboxyltransferase to acetyl-CoA to form malonyl-CoA. The protein is Acetyl-coenzyme A carboxylase carboxyl transferase subunit alpha of Staphylococcus haemolyticus (strain JCSC1435).